Here is a 508-residue protein sequence, read N- to C-terminus: Photosystem II CP47 reaction center protein (508 aa).

6 helical membrane-spanning segments follow: residues 21 to 36 (AVHLMHTALVSGWAGS), 101 to 115 (IILSGLLFLAAIWHW), 140 to 156 (GIHLFLSGVLCFGFGAF), 203 to 218 (IAAGILGIIAGLFHLS), 237 to 252 (VLSSSIAAVFWAAFVV), and 457 to 472 (NFALLFFFGHIWHGSR).

This sequence belongs to the PsbB/PsbC family. PsbB subfamily. In terms of assembly, PSII is composed of 1 copy each of membrane proteins PsbA, PsbB, PsbC, PsbD, PsbE, PsbF, PsbH, PsbI, PsbJ, PsbK, PsbL, PsbM, PsbT, PsbX, PsbY, PsbZ, Psb30/Ycf12, at least 3 peripheral proteins of the oxygen-evolving complex and a large number of cofactors. It forms dimeric complexes. The cofactor is Binds multiple chlorophylls. PSII binds additional chlorophylls, carotenoids and specific lipids..

The protein localises to the plastid. It is found in the chloroplast thylakoid membrane. One of the components of the core complex of photosystem II (PSII). It binds chlorophyll and helps catalyze the primary light-induced photochemical processes of PSII. PSII is a light-driven water:plastoquinone oxidoreductase, using light energy to abstract electrons from H(2)O, generating O(2) and a proton gradient subsequently used for ATP formation. In Staurastrum punctulatum (Green alga), this protein is Photosystem II CP47 reaction center protein.